Consider the following 197-residue polypeptide: Protein GrpE (197 aa).

The disordered stretch occupies residues 1 to 40 (MSSKEQKTPEGQAPEEIIMDRHEEIEAVEPEASAEQVDPR).

It belongs to the GrpE family. Homodimer.

The protein resides in the cytoplasm. Functionally, participates actively in the response to hyperosmotic and heat shock by preventing the aggregation of stress-denatured proteins, in association with DnaK and GrpE. It is the nucleotide exchange factor for DnaK and may function as a thermosensor. Unfolded proteins bind initially to DnaJ; upon interaction with the DnaJ-bound protein, DnaK hydrolyzes its bound ATP, resulting in the formation of a stable complex. GrpE releases ADP from DnaK; ATP binding to DnaK triggers the release of the substrate protein, thus completing the reaction cycle. Several rounds of ATP-dependent interactions between DnaJ, DnaK and GrpE are required for fully efficient folding. The chain is Protein GrpE from Shigella flexneri serotype 5b (strain 8401).